An 81-amino-acid polypeptide reads, in one-letter code: Photosystem I iron-sulfur center (81 aa).

4Fe-4S ferredoxin-type domains are found at residues 2-31 (AHTV…MVPW) and 39-68 (MASA…IRVY). Residues Cys11, Cys14, Cys17, Cys21, Cys48, Cys51, Cys54, and Cys58 each coordinate [4Fe-4S] cluster.

As to quaternary structure, the eukaryotic PSI reaction center is composed of at least 11 subunits. [4Fe-4S] cluster is required as a cofactor.

Its subcellular location is the plastid. The protein localises to the chloroplast thylakoid membrane. It carries out the reaction reduced [plastocyanin] + hnu + oxidized [2Fe-2S]-[ferredoxin] = oxidized [plastocyanin] + reduced [2Fe-2S]-[ferredoxin]. Functionally, apoprotein for the two 4Fe-4S centers FA and FB of photosystem I (PSI); essential for photochemical activity. FB is the terminal electron acceptor of PSI, donating electrons to ferredoxin. The C-terminus interacts with PsaA/B/D and helps assemble the protein into the PSI complex. Required for binding of PsaD and PsaE to PSI. PSI is a plastocyanin/cytochrome c6-ferredoxin oxidoreductase, converting photonic excitation into a charge separation, which transfers an electron from the donor P700 chlorophyll pair to the spectroscopically characterized acceptors A0, A1, FX, FA and FB in turn. This chain is Photosystem I iron-sulfur center, found in Cyanidioschyzon merolae (strain NIES-3377 / 10D) (Unicellular red alga).